We begin with the raw amino-acid sequence, 385 residues long: Actin-2 (385 aa).

It belongs to the actin family. ARP1 subfamily.

Its subcellular location is the cytoplasm. It localises to the cytoskeleton. This Pneumocystis carinii protein is Actin-2.